We begin with the raw amino-acid sequence, 470 residues long: MPVDFVGIPAQKADMNQAAFFLYNSATHGREPFRPIDPKHVKIYVCGPTVYDLAHIGNARSMVVFDVLARVLRRLYPRVTYARNITDVDDKINARARESGVSIDEITARTTADFHADMASLGNLPPDIEPRATAHIAEMILLIEKLIAQEHAYETHGEGEGHVLFSVASDPSYGSLSNRSPDELLAGARIDPAPYKKDPGDFVLWKPSADDQPGWDSPWGRGRPGWHIECSAMSWRYLGEDFDIHGGGGDLIFPHHENECAQSRCAFPGSHFAHYWMHSAMLLLDGEKMSKSLGNVLTVRDLLGQADGEAIRLLFLKTHYRGVLDFRYEALKEAGKELDRFYRALQAHPALPDLDETVENPVLEALRDDLNTPQALSLMHGLAYAALGGDALAAAQLKEGGMLMGLFTREAEAWFQRGINPDEIAQRIADRLQARKDRNFAEADRIRNELAEAGILLEDGPSGTTWRRAS.

C46 contributes to the Zn(2+) binding site. A 'HIGH' region motif is present at residues 48-58; the sequence is PTVYDLAHIGN. Residues C230, H255, and E259 each contribute to the Zn(2+) site. A 'KMSKS' region motif is present at residues 288 to 292; it reads KMSKS. K291 is a binding site for ATP.

The protein belongs to the class-I aminoacyl-tRNA synthetase family. In terms of assembly, monomer. Requires Zn(2+) as cofactor.

It localises to the cytoplasm. The catalysed reaction is tRNA(Cys) + L-cysteine + ATP = L-cysteinyl-tRNA(Cys) + AMP + diphosphate. The sequence is that of Cysteine--tRNA ligase from Granulibacter bethesdensis (strain ATCC BAA-1260 / CGDNIH1).